An 81-amino-acid polypeptide reads, in one-letter code: Small ribosomal subunit protein eS21 (81 aa).

It belongs to the eukaryotic ribosomal protein eS21 family. In terms of assembly, component of the 40S small ribosomal subunit.

Its subcellular location is the cytoplasm. The protein localises to the cytosol. The protein resides in the rough endoplasmic reticulum. In terms of biological role, component of the small ribosomal subunit. The ribosome is a large ribonucleoprotein complex responsible for the synthesis of proteins in the cell. This Danio rerio (Zebrafish) protein is Small ribosomal subunit protein eS21 (rps21).